The chain runs to 296 residues: Acetylglutamate kinase (296 aa).

Residues 69-70, Arg91, and Asn192 each bind substrate; that span reads GG.

This sequence belongs to the acetylglutamate kinase family. ArgB subfamily.

It localises to the cytoplasm. The catalysed reaction is N-acetyl-L-glutamate + ATP = N-acetyl-L-glutamyl 5-phosphate + ADP. The protein operates within amino-acid biosynthesis; L-arginine biosynthesis; N(2)-acetyl-L-ornithine from L-glutamate: step 2/4. Catalyzes the ATP-dependent phosphorylation of N-acetyl-L-glutamate. This chain is Acetylglutamate kinase, found in Ruthia magnifica subsp. Calyptogena magnifica.